Here is a 321-residue protein sequence, read N- to C-terminus: Pirin-like protein 2 (321 aa).

H88, H90, H132, and E134 together coordinate Fe cation.

Belongs to the pirin family. Interacts with RD21A, RD21B and XCP2.

Its subcellular location is the cytoplasm. It localises to the cytosol. It is found in the nucleus. Involved in susceptibility to the bacterial plant pathogen Ralstonia solanacearum. Stabilizes the xylem cysteine protease XCP2 by blocking its autolysis. In Arabidopsis thaliana (Mouse-ear cress), this protein is Pirin-like protein 2.